The following is an 865-amino-acid chain: DNA topoisomerase 1 (865 aa).

The Toprim domain maps to 3 to 142 (KALVIVESPA…RYSRVVFNEI (140 aa)). E9 provides a ligand contact to Mg(2+). A disordered region spans residues 37–65 (LPTSGSAAKKSADSTSTKTAKKPKKDERG). Residues 39–54 (TSGSAAKKSADSTSTK) are compositionally biased toward low complexity. D111 is a binding site for Mg(2+). In terms of domain architecture, Topo IA-type catalytic spans 158–575 (NIDRVNAQQA…HFFSDFTQQL (418 aa)). Positions 192-197 (SAGRVQ) are interaction with DNA. Catalysis depends on Y319, which acts as the O-(5'-phospho-DNA)-tyrosine intermediate. 3 C4-type zinc fingers span residues 599–630 (CPTCGRKMGIRTASTGVFLGCSGYALPPKERC), 662–689 (CPKCGTAMDSYLIDPKRKLHVCGNNPTC), and 711–736 (CEKCGSEMHLKMGRFGKYMACTNEEC).

It belongs to the type IA topoisomerase family. Monomer. Requires Mn(2+) as cofactor. Ca(2+) is required as a cofactor.

The enzyme catalyses ATP-independent breakage of single-stranded DNA, followed by passage and rejoining.. Its function is as follows. Releases the supercoiling and torsional tension of DNA, which is introduced during the DNA replication and transcription, by transiently cleaving and rejoining one strand of the DNA duplex. Introduces a single-strand break via transesterification at a target site in duplex DNA. The scissile phosphodiester is attacked by the catalytic tyrosine of the enzyme, resulting in the formation of a DNA-(5'-phosphotyrosyl)-enzyme intermediate and the expulsion of a 3'-OH DNA strand. The free DNA strand then undergoes passage around the unbroken strand, thus removing DNA supercoils. Finally, in the religation step, the DNA 3'-OH attacks the covalent intermediate to expel the active-site tyrosine and restore the DNA phosphodiester backbone. The sequence is that of DNA topoisomerase 1 from Escherichia coli (strain K12).